The primary structure comprises 517 residues: Maturase K (517 aa).

Belongs to the intron maturase 2 family. MatK subfamily.

It is found in the plastid. It localises to the chloroplast. Usually encoded in the trnK tRNA gene intron. Probably assists in splicing its own and other chloroplast group II introns. This Palhinhaea cernua (Nodding clubmoss) protein is Maturase K.